A 243-amino-acid polypeptide reads, in one-letter code: Orotidine 5'-phosphate decarboxylase (243 aa).

Residues Asp-16, Lys-38, 65-74, Thr-120, Arg-181, Gln-190, Gly-210, and Arg-211 each bind substrate; that span reads DLKLHDIPNT. Lys-67 functions as the Proton donor in the catalytic mechanism.

It belongs to the OMP decarboxylase family. Type 1 subfamily. As to quaternary structure, homodimer.

The enzyme catalyses orotidine 5'-phosphate + H(+) = UMP + CO2. The protein operates within pyrimidine metabolism; UMP biosynthesis via de novo pathway; UMP from orotate: step 2/2. In terms of biological role, catalyzes the decarboxylation of orotidine 5'-monophosphate (OMP) to uridine 5'-monophosphate (UMP). The sequence is that of Orotidine 5'-phosphate decarboxylase from Bradyrhizobium sp. (strain ORS 278).